We begin with the raw amino-acid sequence, 153 residues long: Ribonuclease P protein component (153 aa).

This sequence belongs to the RnpA family. As to quaternary structure, consists of a catalytic RNA component (M1 or rnpB) and a protein subunit.

The enzyme catalyses Endonucleolytic cleavage of RNA, removing 5'-extranucleotides from tRNA precursor.. Functionally, RNaseP catalyzes the removal of the 5'-leader sequence from pre-tRNA to produce the mature 5'-terminus. It can also cleave other RNA substrates such as 4.5S RNA. The protein component plays an auxiliary but essential role in vivo by binding to the 5'-leader sequence and broadening the substrate specificity of the ribozyme. The protein is Ribonuclease P protein component of Helicobacter acinonychis (strain Sheeba).